The chain runs to 212 residues: ATP-dependent dethiobiotin synthetase BioD (212 aa).

Asp-12–Phe-17 contacts ATP. Position 16 (Thr-16) interacts with Mg(2+). Lys-33 is a catalytic residue. Ser-37 contacts substrate. Residues Asp-50, Glu-110 to Gly-113, and Asn-170 to Cys-171 each bind ATP. Mg(2+) contacts are provided by Asp-50 and Glu-110.

This sequence belongs to the dethiobiotin synthetase family. In terms of assembly, homodimer. Mg(2+) is required as a cofactor.

Its subcellular location is the cytoplasm. It catalyses the reaction (7R,8S)-7,8-diammoniononanoate + CO2 + ATP = (4R,5S)-dethiobiotin + ADP + phosphate + 3 H(+). Its pathway is cofactor biosynthesis; biotin biosynthesis; biotin from 7,8-diaminononanoate: step 1/2. Functionally, catalyzes a mechanistically unusual reaction, the ATP-dependent insertion of CO2 between the N7 and N8 nitrogen atoms of 7,8-diaminopelargonic acid (DAPA, also called 7,8-diammoniononanoate) to form a ureido ring. The polypeptide is ATP-dependent dethiobiotin synthetase BioD (Legionella pneumophila (strain Lens)).